Reading from the N-terminus, the 424-residue chain is Arogenate dehydratase 3, chloroplastic (424 aa).

A chloroplast-targeting transit peptide spans 1–24 (MRTLLPSHTPATVTTAARRRHVIH). A compositionally biased stretch (low complexity) spans 57-71 (EQSESLSSNSNGSSS). The segment at 57–77 (EQSESLSSNSNGSSSYHVSAV) is disordered. In terms of domain architecture, Prephenate dehydratase spans 122 to 299 (RVAYQGVPGA…NVTRFVMLAR (178 aa)). The region spanning 313–404 (SIVFAHEKGT…SFLRVLGSYP (92 aa)) is the ACT domain.

May interact with GPA1. In terms of tissue distribution, expressed in roots, leaves, stems, flowers and siliques.

The protein localises to the plastid. It localises to the chloroplast stroma. The catalysed reaction is L-arogenate + H(+) = L-phenylalanine + CO2 + H2O. Its pathway is amino-acid biosynthesis; L-phenylalanine biosynthesis; L-phenylalanine from L-arogenate: step 1/1. Its function is as follows. Converts the prephenate produced from the shikimate-chorismate pathway into phenylalanine. Together with GCR1 and GPA1, required for blue light-mediated synthesis of phenylpyruvate and subsequently of phenylalanine (Phe), in etiolated seedlings. In Arabidopsis thaliana (Mouse-ear cress), this protein is Arogenate dehydratase 3, chloroplastic.